The chain runs to 201 residues: Small ribosomal subunit protein uS4 (201 aa).

Residues 91–155 (TRLDNVVYRA…STLPFQVARE (65 aa)) enclose the S4 RNA-binding domain.

It belongs to the universal ribosomal protein uS4 family. Part of the 30S ribosomal subunit. Contacts protein S5. The interaction surface between S4 and S5 is involved in control of translational fidelity.

Its function is as follows. One of the primary rRNA binding proteins, it binds directly to 16S rRNA where it nucleates assembly of the body of the 30S subunit. In terms of biological role, with S5 and S12 plays an important role in translational accuracy. In Nocardia farcinica (strain IFM 10152), this protein is Small ribosomal subunit protein uS4.